A 200-amino-acid polypeptide reads, in one-letter code: Rubrerythrin (200 aa).

Positions 12–155 constitute a Ferritin-like diiron domain; that stretch reads SIKGSKTEKH…ALLAHVEDGS (144 aa). Residues Glu29, Glu62, Glu103, Glu106, Glu137, His140, Cys167, Cys170, Cys183, and Cys186 each contribute to the Fe(3+) site. The 39-residue stretch at 162–200 folds into the Rubredoxin-like domain; sequence EIAWQCRNCGYVITSKKAPKLCPACAHPQAYFEPMKTNY.

In terms of assembly, homodimer. Possesses two rubredoxin-like centers and two non-sulfur oxo-bridged di-iron centers per dimer. Fe(3+) serves as cofactor.

The protein localises to the cytoplasm. Its function is as follows. May provide oxidative stress protection via catalytic reduction of intracellular hydrogen peroxide. The chain is Rubrerythrin (rbr) from Porphyromonas gingivalis (strain ATCC BAA-308 / W83).